Consider the following 21-residue polypeptide: Peptide PGLa-R2 (21 aa).

Leucine 21 is subject to Leucine amide.

As to expression, expressed by the skin glands.

It is found in the secreted. Functionally, antimicrobial peptide. The polypeptide is Peptide PGLa-R2 (Xenopus ruwenzoriensis (Uganda clawed frog)).